Reading from the N-terminus, the 132-residue chain is Protein p15 (132 aa).

May play a role in infectivity. This chain is Protein p15, found in Panicum mosaic virus (strain United States/Kansas 109S) (PMV).